A 159-amino-acid chain; its full sequence is Urease accessory protein UreE (159 aa).

It belongs to the UreE family.

It is found in the cytoplasm. Its function is as follows. Involved in urease metallocenter assembly. Binds nickel. Probably functions as a nickel donor during metallocenter assembly. The protein is Urease accessory protein UreE of Pseudomonas entomophila (strain L48).